The sequence spans 326 residues: tRNA(Ile)-lysidine synthase (326 aa).

33–38 (SGGPDS) is a binding site for ATP.

This sequence belongs to the tRNA(Ile)-lysidine synthase family.

It localises to the cytoplasm. It catalyses the reaction cytidine(34) in tRNA(Ile2) + L-lysine + ATP = lysidine(34) in tRNA(Ile2) + AMP + diphosphate + H(+). Ligates lysine onto the cytidine present at position 34 of the AUA codon-specific tRNA(Ile) that contains the anticodon CAU, in an ATP-dependent manner. Cytidine is converted to lysidine, thus changing the amino acid specificity of the tRNA from methionine to isoleucine. The polypeptide is tRNA(Ile)-lysidine synthase (Novosphingobium aromaticivorans (strain ATCC 700278 / DSM 12444 / CCUG 56034 / CIP 105152 / NBRC 16084 / F199)).